A 243-amino-acid chain; its full sequence is Sugar fermentation stimulation protein homolog (243 aa).

It belongs to the SfsA family.

In Bdellovibrio bacteriovorus (strain ATCC 15356 / DSM 50701 / NCIMB 9529 / HD100), this protein is Sugar fermentation stimulation protein homolog.